Consider the following 148-residue polypeptide: Transcription antitermination protein NusB (148 aa).

The protein belongs to the NusB family.

Functionally, involved in transcription antitermination. Required for transcription of ribosomal RNA (rRNA) genes. Binds specifically to the boxA antiterminator sequence of the ribosomal RNA (rrn) operons. The polypeptide is Transcription antitermination protein NusB (Desulfitobacterium hafniense (strain DSM 10664 / DCB-2)).